Consider the following 146-residue polypeptide: UPF0742 protein SPAC977.02 (146 aa).

The chain crosses the membrane as a helical span at residues 38–60; sequence LTVKYCLAVKLLIYLLYCWYIYS.

It belongs to the UPF0742 family.

It is found in the cytoplasm. The protein resides in the nucleus membrane. This chain is UPF0742 protein SPAC977.02, found in Schizosaccharomyces pombe (strain 972 / ATCC 24843) (Fission yeast).